The chain runs to 201 residues: Potassium-transporting ATPase KdpC subunit (201 aa).

Residues 7–29 traverse the membrane as a helical segment; it reads PALVLLTALTAITGLAYPLAMTG.

This sequence belongs to the KdpC family. As to quaternary structure, the system is composed of three essential subunits: KdpA, KdpB and KdpC.

The protein resides in the cell inner membrane. Part of the high-affinity ATP-driven potassium transport (or Kdp) system, which catalyzes the hydrolysis of ATP coupled with the electrogenic transport of potassium into the cytoplasm. This subunit acts as a catalytic chaperone that increases the ATP-binding affinity of the ATP-hydrolyzing subunit KdpB by the formation of a transient KdpB/KdpC/ATP ternary complex. This Methylorubrum populi (strain ATCC BAA-705 / NCIMB 13946 / BJ001) (Methylobacterium populi) protein is Potassium-transporting ATPase KdpC subunit.